We begin with the raw amino-acid sequence, 447 residues long: NADP-specific glutamate dehydrogenase (447 aa).

Substrate-binding residues include Lys92, Gln113, and Lys116. Residue Lys128 is the Proton donor of the active site. Gly167 contributes to the substrate binding site. NADP(+)-binding residues include Thr211 and Asn242. Ser380 serves as a coordination point for substrate.

It belongs to the Glu/Leu/Phe/Val dehydrogenases family. Homohexamer.

It catalyses the reaction L-glutamate + NADP(+) + H2O = 2-oxoglutarate + NH4(+) + NADPH + H(+). With respect to regulation, competitively inhibited by homoserine and by glutamine. Functionally, catalyzes the reversible oxidative deamination of glutamate to alpha-ketoglutarate and ammonia. The chain is NADP-specific glutamate dehydrogenase from Escherichia coli (strain K12).